The primary structure comprises 142 residues: Large ribosomal subunit protein uL11 (142 aa).

This sequence belongs to the universal ribosomal protein uL11 family. As to quaternary structure, part of the ribosomal stalk of the 50S ribosomal subunit. Interacts with L10 and the large rRNA to form the base of the stalk. L10 forms an elongated spine to which L12 dimers bind in a sequential fashion forming a multimeric L10(L12)X complex. One or more lysine residues are methylated.

In terms of biological role, forms part of the ribosomal stalk which helps the ribosome interact with GTP-bound translation factors. This Aliivibrio fischeri (strain MJ11) (Vibrio fischeri) protein is Large ribosomal subunit protein uL11.